The following is a 394-amino-acid chain: Ribulose bisphosphate carboxylase large chain (394 aa).

Lys5 is subject to N6,N6,N6-trimethyllysine. Residues Asn114 and Thr164 each contribute to the substrate site. Lys166 serves as the catalytic Proton acceptor. Position 168 (Lys168) interacts with substrate. Mg(2+) is bound by residues Lys192, Asp194, and Glu195. N6-carboxylysine is present on Lys192. His285 functions as the Proton acceptor in the catalytic mechanism. Substrate-binding residues include Arg286, His318, and Ser370.

The protein belongs to the RuBisCO large chain family. Type I subfamily. As to quaternary structure, heterohexadecamer of 8 large chains and 8 small chains. Requires Mg(2+) as cofactor.

It localises to the plastid. Its subcellular location is the chloroplast. The catalysed reaction is 2 (2R)-3-phosphoglycerate + 2 H(+) = D-ribulose 1,5-bisphosphate + CO2 + H2O. It carries out the reaction D-ribulose 1,5-bisphosphate + O2 = 2-phosphoglycolate + (2R)-3-phosphoglycerate + 2 H(+). Its function is as follows. RuBisCO catalyzes two reactions: the carboxylation of D-ribulose 1,5-bisphosphate, the primary event in carbon dioxide fixation, as well as the oxidative fragmentation of the pentose substrate in the photorespiration process. Both reactions occur simultaneously and in competition at the same active site. This is Ribulose bisphosphate carboxylase large chain (rbcL) from Euryale ferox (Gorgon plant).